Reading from the N-terminus, the 343-residue chain is tRNA N6-adenosine threonylcarbamoyltransferase (343 aa).

Fe cation is bound by residues His111 and His115. Residues 134–138 (LVSGG), Asp167, Gly180, and Asn276 contribute to the substrate site. A Fe cation-binding site is contributed by Asp304.

The protein belongs to the KAE1 / TsaD family. It depends on Fe(2+) as a cofactor.

It localises to the cytoplasm. It carries out the reaction L-threonylcarbamoyladenylate + adenosine(37) in tRNA = N(6)-L-threonylcarbamoyladenosine(37) in tRNA + AMP + H(+). Functionally, required for the formation of a threonylcarbamoyl group on adenosine at position 37 (t(6)A37) in tRNAs that read codons beginning with adenine. Is involved in the transfer of the threonylcarbamoyl moiety of threonylcarbamoyl-AMP (TC-AMP) to the N6 group of A37, together with TsaE and TsaB. TsaD likely plays a direct catalytic role in this reaction. This Chromohalobacter salexigens (strain ATCC BAA-138 / DSM 3043 / CIP 106854 / NCIMB 13768 / 1H11) protein is tRNA N6-adenosine threonylcarbamoyltransferase.